Here is a 256-residue protein sequence, read N- to C-terminus: Short-chain dehydrogenase/reductase cdmF (256 aa).

Residues V11, D57, and R119 each coordinate NADP(+). The active-site Proton donor is S137. Positions 151, 155, 183, and 187 each coordinate NADP(+). Y151 acts as the Proton acceptor in catalysis. The active-site Lowers pKa of active site Tyr is the K155.

This sequence belongs to the short-chain dehydrogenases/reductases (SDR) family.

It carries out the reaction 3-hydroxypentacecilide A + A = chrodrimanin C + AH2. The catalysed reaction is chrodrimanin F + A = chrodrimanin H + AH2. It participates in secondary metabolite biosynthesis; terpenoid biosynthesis. Short-chain dehydrogenase/reductase; part of the gene cluster that mediates the biosynthesis of chrodrimanin B, a meroterpenoid that acts as a potent blocker of insect GABA-gated chloride channels. The first step of the pathway is the biosynthesis of 6-hydroxymellein by the polyketide synthase cdmE. The prenyltransferase cdmH acts as a 6-hydroxymellein 5-farnesyltransferase and produces the hydrophobic metabolite verruculide C. The FAD-dependent monooxygenase cdmI further converts verruculide C into verruculide B. The terpene cyclase cdmG then produced the pentacyclic molecule 3-hydroxypentacecilide A, the backbone structure of chrodrimanin B, via folding the farnesyl moiety of the substrate into the chair-boat conformation. The short-chain dehydrogenase/reductase cdmF functions as the 3-OH dehydrogenase that oxidizes the C-3 hydroxyl group of 3-hydroxypentacecilide A and produces chrodrimanin C, the dehydrogenated product of 3-hydroxypentacecilide A. The cytochrome P450 monooxygenase cdmJ then accepts both 3-hydroxypentacecilide A and chrodrimanin C and functions as a C-7-beta-hydroxylase to produce respectively chrodrimanin H and chrodrimanin F. The dioxygenase cdmA accepts chrodrimanin H to afford chrodrimanin E, which is further transformed to chrodrimanin A by the dioxygenase cdmD. CdmA can also accept chrodrimanin C as substrate to convert it into verruculide A, which is further converted into chrodrimanin T by cdmD. The last step of the biosynthesis is proposed to be performed by the acetyltransferase cdmC which acetylates chrodrimanin A to yield chrodrimanin B. The pathway may also lead to the production of additional shunt products, including chrodrimanins T and U. This Talaromyces verruculosus (Penicillium verruculosum) protein is Short-chain dehydrogenase/reductase cdmF.